Reading from the N-terminus, the 151-residue chain is Nucleoside diphosphate kinase (151 aa).

6 residues coordinate ATP: K9, F57, R85, T91, R102, and N112. The active-site Pros-phosphohistidine intermediate is H115.

Belongs to the NDK family. It depends on Mg(2+) as a cofactor.

The protein resides in the cytoplasm. The catalysed reaction is a 2'-deoxyribonucleoside 5'-diphosphate + ATP = a 2'-deoxyribonucleoside 5'-triphosphate + ADP. It carries out the reaction a ribonucleoside 5'-diphosphate + ATP = a ribonucleoside 5'-triphosphate + ADP. Its function is as follows. Major role in the synthesis of nucleoside triphosphates other than ATP. The ATP gamma phosphate is transferred to the NDP beta phosphate via a ping-pong mechanism, using a phosphorylated active-site intermediate. This chain is Nucleoside diphosphate kinase, found in Archaeoglobus fulgidus (strain ATCC 49558 / DSM 4304 / JCM 9628 / NBRC 100126 / VC-16).